Here is a 67-residue protein sequence, read N- to C-terminus: DNA-directed RNA polymerase subunit omega (67 aa).

The protein belongs to the RNA polymerase subunit omega family. As to quaternary structure, the RNAP catalytic core consists of 2 alpha, 1 beta, 1 beta' and 1 omega subunit. When a sigma factor is associated with the core the holoenzyme is formed, which can initiate transcription.

The catalysed reaction is RNA(n) + a ribonucleoside 5'-triphosphate = RNA(n+1) + diphosphate. In terms of biological role, promotes RNA polymerase assembly. Latches the N- and C-terminal regions of the beta' subunit thereby facilitating its interaction with the beta and alpha subunits. The protein is DNA-directed RNA polymerase subunit omega of Exiguobacterium sibiricum (strain DSM 17290 / CCUG 55495 / CIP 109462 / JCM 13490 / 255-15).